We begin with the raw amino-acid sequence, 261 residues long: MCSLEELELWNMIKHKAQKILKKEPILSNFYQKSILNHKKLSHSLSCILSDKLSTSMISEKDIYNIFNKIYANNISIINSVVKDIKAASQRDPVVKHYLTPLLYLKGFHALEAYRLSHYLWNIKRYELSAYLQSRISTVFSVDIHPAASIGSGIMLDHATGIVIGEGVIIENDVSIFHSVTLGGTGSNTGKNRHPIIRKNVTIGAGAKILGNIEVGQGVKVGAGSIVLKNIPPFVTVVGVPAKIIKKIKNSNKNLFQKEKK.

The protein belongs to the transferase hexapeptide repeat family.

The protein localises to the cytoplasm. The catalysed reaction is L-serine + acetyl-CoA = O-acetyl-L-serine + CoA. It participates in amino-acid biosynthesis; L-cysteine biosynthesis; L-cysteine from L-serine: step 1/2. The sequence is that of Serine acetyltransferase (cysE) from Buchnera aphidicola subsp. Schizaphis graminum (strain Sg).